A 374-amino-acid polypeptide reads, in one-letter code: Flagellar P-ring protein (374 aa).

The first 29 residues, 1 to 29 (MRRVRTTRLFQVACAAIVALASSAMSAHA), serve as a signal peptide directing secretion.

Belongs to the FlgI family. As to quaternary structure, the basal body constitutes a major portion of the flagellar organelle and consists of four rings (L,P,S, and M) mounted on a central rod.

The protein resides in the periplasm. Its subcellular location is the bacterial flagellum basal body. Assembles around the rod to form the L-ring and probably protects the motor/basal body from shearing forces during rotation. The polypeptide is Flagellar P-ring protein (Bradyrhizobium sp. (strain BTAi1 / ATCC BAA-1182)).